The chain runs to 223 residues: Large ribosomal subunit protein uL6c (223 aa).

The transit peptide at 1-41 (MASSLVSSFQPRSAFLGDRNVFKVSSTPFAQVGYSSKTIEC) directs the protein to the chloroplast.

It belongs to the universal ribosomal protein uL6 family. As to quaternary structure, part of the 50S ribosomal subunit.

The protein resides in the plastid. It is found in the chloroplast. This protein binds directly to 23S ribosomal RNA and is located at the aminoacyl-tRNA binding site of the peptidyltransferase center. The sequence is that of Large ribosomal subunit protein uL6c (RPL6) from Arabidopsis thaliana (Mouse-ear cress).